The primary structure comprises 346 residues: MANAYKQAGVDIEAGYEAVSRMKKHVQTTMRKEVLGGLGGFGGMFDLSKFALEEPVLVSGTDGVGTKLMLAFMADKHDTIGIDAVAMCVNDIVVQGAEPLFFLDYIACGKAEPSKIENIVKGISEGCRQAGCALIGGETAEMPGMYSTEEYDLAGFTVGIVDKKKIVTGEKIEAGHVLIGLASSGIHSNGYSLVRKVLLEDGELSLDRIYGRLELPLGEELLKPTKIYVKPILELLKNHEVYGMAHITGGGFIENIPRMLPEGIGAEIELGSWEIQPIFSLLQEVGKLEEKEMFNIFNMGIGMVVAVKEEDAKDIVRLLGEQGETARIIGRTVQGAGVTFNGGKAL.

Belongs to the AIR synthase family.

The protein localises to the cytoplasm. It carries out the reaction 2-formamido-N(1)-(5-O-phospho-beta-D-ribosyl)acetamidine + ATP = 5-amino-1-(5-phospho-beta-D-ribosyl)imidazole + ADP + phosphate + H(+). It functions in the pathway purine metabolism; IMP biosynthesis via de novo pathway; 5-amino-1-(5-phospho-D-ribosyl)imidazole from N(2)-formyl-N(1)-(5-phospho-D-ribosyl)glycinamide: step 2/2. This chain is Phosphoribosylformylglycinamidine cyclo-ligase, found in Bacillus cereus (strain ZK / E33L).